The chain runs to 268 residues: NAC transcription factor 29 (268 aa).

The region spanning 9–161 (LPPGFRFHPT…EWVLCRIYKK (153 aa)) is the NAC domain. The DNA-binding element occupies 106–167 (VGVKKALVFY…IYKKRGASKL (62 aa)).

As to expression, expressed in senescing leaves, petals and sepals.

The protein localises to the nucleus. Functionally, transcription activator that binds to, and transactivates the promoter of the abscisic aldehyde oxidase AAO3. Promotes chlorophyll degradation in leaves by enhancing transcription of AAO3, which leads to increased levels of the senescence-inducing hormone abscisic acid (ABA). Involved in the control of dehydration in senescing leaves. Binds to the DNA sequence 5'-CACGTAAGT-3' of SAG113 promoter. SAG113 acts as a negative regulator of ABA signaling for stomatal closure in leaves, and controls water loss during leaf senescence. Transcription factor of the NAC family involved in senescence. May function in the transition between active cell division and cell expansion. Required for normal seed development and morphology. The polypeptide is NAC transcription factor 29 (NAC029) (Arabidopsis thaliana (Mouse-ear cress)).